The primary structure comprises 271 residues: Formamidopyrimidine-DNA glycosylase (271 aa).

Pro2 acts as the Schiff-base intermediate with DNA in catalysis. The active-site Proton donor is the Glu3. The Proton donor; for beta-elimination activity role is filled by Lys57. DNA contacts are provided by His90, Arg109, and Lys151. The segment at 236–270 (HVYGRGGETCTSCGNLLSEIRLGQRTTVFCGICQT) adopts an FPG-type zinc-finger fold. The active-site Proton donor; for delta-elimination activity is the Arg260.

It belongs to the FPG family. In terms of assembly, monomer. Zn(2+) is required as a cofactor.

It carries out the reaction Hydrolysis of DNA containing ring-opened 7-methylguanine residues, releasing 2,6-diamino-4-hydroxy-5-(N-methyl)formamidopyrimidine.. The catalysed reaction is 2'-deoxyribonucleotide-(2'-deoxyribose 5'-phosphate)-2'-deoxyribonucleotide-DNA = a 3'-end 2'-deoxyribonucleotide-(2,3-dehydro-2,3-deoxyribose 5'-phosphate)-DNA + a 5'-end 5'-phospho-2'-deoxyribonucleoside-DNA + H(+). In terms of biological role, involved in base excision repair of DNA damaged by oxidation or by mutagenic agents. Acts as a DNA glycosylase that recognizes and removes damaged bases. Has a preference for oxidized purines, such as 7,8-dihydro-8-oxoguanine (8-oxoG). Has AP (apurinic/apyrimidinic) lyase activity and introduces nicks in the DNA strand. Cleaves the DNA backbone by beta-delta elimination to generate a single-strand break at the site of the removed base with both 3'- and 5'-phosphates. In Shewanella baltica (strain OS155 / ATCC BAA-1091), this protein is Formamidopyrimidine-DNA glycosylase.